Reading from the N-terminus, the 213-residue chain is Probable nicotinate-nucleotide adenylyltransferase (213 aa).

This sequence belongs to the NadD family.

The enzyme catalyses nicotinate beta-D-ribonucleotide + ATP + H(+) = deamido-NAD(+) + diphosphate. The protein operates within cofactor biosynthesis; NAD(+) biosynthesis; deamido-NAD(+) from nicotinate D-ribonucleotide: step 1/1. Its function is as follows. Catalyzes the reversible adenylation of nicotinate mononucleotide (NaMN) to nicotinic acid adenine dinucleotide (NaAD). The polypeptide is Probable nicotinate-nucleotide adenylyltransferase (Escherichia coli O139:H28 (strain E24377A / ETEC)).